We begin with the raw amino-acid sequence, 153 residues long: Ribonuclease P protein component (153 aa).

This sequence belongs to the RnpA family. In terms of assembly, consists of a catalytic RNA component (M1 or rnpB) and a protein subunit.

It carries out the reaction Endonucleolytic cleavage of RNA, removing 5'-extranucleotides from tRNA precursor.. In terms of biological role, RNaseP catalyzes the removal of the 5'-leader sequence from pre-tRNA to produce the mature 5'-terminus. It can also cleave other RNA substrates such as 4.5S RNA. The protein component plays an auxiliary but essential role in vivo by binding to the 5'-leader sequence and broadening the substrate specificity of the ribozyme. The protein is Ribonuclease P protein component of Helicobacter acinonychis (strain Sheeba).